The chain runs to 908 residues: UPF0182 protein NT01CX_0852 (908 aa).

7 helical membrane-spanning segments follow: residues 8-28, 47-67, 96-116, 157-177, 209-229, 253-273, and 280-300; these read IGLFFCIALTVIFLKKIVNVI, FTSVISLFILVFLICFVAIKT, IINALTLIISLFIALNFSLGY, LLSLLILLAVITVIVYMFLNI, LAILGALLLLCISVGYLIKAW, FYIAISIVSIISSIIVAFSIL, and IISCVILIAVLVISERVVSGA.

This sequence belongs to the UPF0182 family.

It is found in the cell membrane. The polypeptide is UPF0182 protein NT01CX_0852 (Clostridium novyi (strain NT)).